The primary structure comprises 229 residues: Ribonuclease 3 (229 aa).

The RNase III domain maps to 5–127; that stretch reads LAGLERKLGY…LIGAIYLDAD (123 aa). E40 is a Mg(2+) binding site. D44 is a catalytic residue. Residues D113 and E116 each coordinate Mg(2+). The active site involves E116. In terms of domain architecture, DRBM spans 154-224; it reads DPKTRLQEFL…AASALIALGV (71 aa).

This sequence belongs to the ribonuclease III family. Homodimer. The cofactor is Mg(2+).

It is found in the cytoplasm. It carries out the reaction Endonucleolytic cleavage to 5'-phosphomonoester.. Functionally, digests double-stranded RNA. Involved in the processing of primary rRNA transcript to yield the immediate precursors to the large and small rRNAs (23S and 16S). Processes some mRNAs, and tRNAs when they are encoded in the rRNA operon. Processes pre-crRNA and tracrRNA of type II CRISPR loci if present in the organism. The sequence is that of Ribonuclease 3 from Pseudomonas putida (strain ATCC 700007 / DSM 6899 / JCM 31910 / BCRC 17059 / LMG 24140 / F1).